Reading from the N-terminus, the 243-residue chain is UPF0502 protein Rmet_3697 (243 aa).

Positions 1 to 11 (MTDTPDTPDTP) are enriched in low complexity. The segment at 1–23 (MTDTPDTPDTPMATGASSRPPLR) is disordered.

The protein belongs to the UPF0502 family.

The protein is UPF0502 protein Rmet_3697 of Cupriavidus metallidurans (strain ATCC 43123 / DSM 2839 / NBRC 102507 / CH34) (Ralstonia metallidurans).